The primary structure comprises 1277 residues: Y' element ATP-dependent helicase YEL077C (1277 aa).

Residues 222–399 enclose the Helicase ATP-binding domain; that stretch reads EIYMADTPSV…LQRIGLTGLA (178 aa). 235–242 serves as a coordination point for ATP; the sequence is APPGYGKT. The DEAH box motif lies at 345–348; the sequence is DEFH. Positions 454–605 constitute a Helicase C-terminal domain; the sequence is ALKLLLALFE…EFYGLESKKG (152 aa). 2 disordered regions span residues 696 to 763 and 775 to 895; these read NVRT…NATT and TTKS…NRFH. Low complexity predominate over residues 775 to 878; it reads TTKSINSSTN…ATTTESTNAS (104 aa). Residues 879–895 show a composition bias toward basic and acidic residues; that stretch reads AKEDANKDGNAEDNRFH.

The protein belongs to the helicase family. Yeast subtelomeric Y' repeat subfamily.

Catalyzes DNA unwinding and is involved in telomerase-independent telomere maintenance. The protein is Y' element ATP-dependent helicase YEL077C of Saccharomyces cerevisiae (strain ATCC 204508 / S288c) (Baker's yeast).